A 376-amino-acid polypeptide reads, in one-letter code: Hydroxylysine kinase (376 aa).

Residue Asp-229 is the Proton acceptor of the active site.

Belongs to the aminoglycoside phosphotransferase family.

The protein resides in the cytoplasm. The catalysed reaction is (5R)-5-hydroxy-L-lysine + GTP = (5R)-5-phosphooxy-L-lysine + GDP + H(+). Catalyzes the GTP-dependent phosphorylation of 5-hydroxy-L-lysine. This Bos taurus (Bovine) protein is Hydroxylysine kinase (HYKK).